The chain runs to 593 residues: Arginine--tRNA ligase (593 aa).

Positions proline 123 to histidine 133 match the 'HIGH' region motif.

The protein belongs to the class-I aminoacyl-tRNA synthetase family. Monomer.

Its subcellular location is the cytoplasm. The catalysed reaction is tRNA(Arg) + L-arginine + ATP = L-arginyl-tRNA(Arg) + AMP + diphosphate. The polypeptide is Arginine--tRNA ligase (Phenylobacterium zucineum (strain HLK1)).